The chain runs to 463 residues: ATP-dependent protease ATPase subunit HslU (463 aa).

Residues Ile-19 and 61–66 (GVGKTE) contribute to the ATP site. Residues 154-174 (FGGAQNSSQTSDTQEDGEIEK) form a disordered region. Asp-277, Glu-341, and Arg-413 together coordinate ATP.

The protein belongs to the ClpX chaperone family. HslU subfamily. As to quaternary structure, a double ring-shaped homohexamer of HslV is capped on each side by a ring-shaped HslU homohexamer. The assembly of the HslU/HslV complex is dependent on binding of ATP.

The protein localises to the cytoplasm. Functionally, ATPase subunit of a proteasome-like degradation complex; this subunit has chaperone activity. The binding of ATP and its subsequent hydrolysis by HslU are essential for unfolding of protein substrates subsequently hydrolyzed by HslV. HslU recognizes the N-terminal part of its protein substrates and unfolds these before they are guided to HslV for hydrolysis. The sequence is that of ATP-dependent protease ATPase subunit HslU from Bacillus cereus (strain G9842).